A 319-amino-acid polypeptide reads, in one-letter code: Cobalamin biosynthesis protein CbiB (319 aa).

The next 5 membrane-spanning stretches (helical) occupy residues 56–76, 82–102, 153–173, 204–224, and 296–316; these read VMWV…LALA, WFGW…RSLA, VDGI…LAMA, VANY…AGLC, and LMWV…CGLS.

The protein belongs to the CobD/CbiB family.

Its subcellular location is the cell membrane. It participates in cofactor biosynthesis; adenosylcobalamin biosynthesis. Its function is as follows. Converts cobyric acid to cobinamide by the addition of aminopropanol on the F carboxylic group. However, the true cosubstrate could be (R)-1-amino-2-propanol O-2-phosphate, leading to cobinamide phosphate. The protein is Cobalamin biosynthesis protein CbiB of Salmonella paratyphi B (strain ATCC BAA-1250 / SPB7).